Reading from the N-terminus, the 361-residue chain is Caspase activity and apoptosis inhibitor 1 (361 aa).

Over residues 1-14 (MTGKKSSREKRRKR) the composition is skewed to basic residues. 2 disordered regions span residues 1-28 (MTGKKSSREKRRKRSSQEAAAALAAPDI) and 67-100 (GGSGGSCWGGSSVERSERRKRRSTDSSSVSGSLQ). Positions 19–28 (AAAALAAPDI) are enriched in low complexity. S89 carries the phosphoserine modification. T90 is modified (phosphothreonine). K104 is covalently cross-linked (Glycyl lysine isopeptide (Lys-Gly) (interchain with G-Cter in SUMO2)). S120 and S203 each carry phosphoserine. Disordered stretches follow at residues 198-218 (DNGMDSDMEEEADDGSKMGSD) and 230-331 (ASSV…DVQP). The segment covering 199–210 (NGMDSDMEEEAD) has biased composition (acidic residues). Residues 234-251 (RENKQPEGLELKQGKGED) show a composition bias toward basic and acidic residues. Residues 272–281 (EEAAAPEAPE) show a composition bias toward low complexity. Residues 281–311 (ENTVQSEAGQIDDLEKDIEKSVNEILGLAES) adopt a coiled-coil conformation. Phosphoserine is present on S312.

Ubiquitous.

In terms of biological role, anti-apoptotic protein that modulates a caspase-10 dependent mitochondrial caspase-3/9 feedback amplification loop. The sequence is that of Caspase activity and apoptosis inhibitor 1 (CAAP1) from Homo sapiens (Human).